The following is a 309-amino-acid chain: ADP-L-glycero-D-manno-heptose-6-epimerase (309 aa).

Residues 10-11, 31-32, Lys38, Lys53, 75-79, and Asn92 each bind NADP(+); these read LI, DN, and QGACS. The active-site Proton acceptor is Tyr139. Lys143 serves as a coordination point for NADP(+). Asn168 serves as a coordination point for substrate. 2 residues coordinate NADP(+): Val169 and Lys177. Lys177 serves as the catalytic Proton acceptor. Substrate-binding positions include Ser179, His186, 200 to 203, Arg208, and Tyr271; that span reads FAGS.

This sequence belongs to the NAD(P)-dependent epimerase/dehydratase family. HldD subfamily. As to quaternary structure, homopentamer. It depends on NADP(+) as a cofactor.

The catalysed reaction is ADP-D-glycero-beta-D-manno-heptose = ADP-L-glycero-beta-D-manno-heptose. The protein operates within nucleotide-sugar biosynthesis; ADP-L-glycero-beta-D-manno-heptose biosynthesis; ADP-L-glycero-beta-D-manno-heptose from D-glycero-beta-D-manno-heptose 7-phosphate: step 4/4. In terms of biological role, catalyzes the interconversion between ADP-D-glycero-beta-D-manno-heptose and ADP-L-glycero-beta-D-manno-heptose via an epimerization at carbon 6 of the heptose. The chain is ADP-L-glycero-D-manno-heptose-6-epimerase from Histophilus somni (strain 2336) (Haemophilus somnus).